Here is a 288-residue protein sequence, read N- to C-terminus: Acetyl-coenzyme A carboxylase carboxyl transferase subunit beta (288 aa).

The CoA carboxyltransferase N-terminal domain maps to 34 to 288 (LFAKCPGCKQ…TLLSFHGGVQ (255 aa)). Zn(2+) is bound by residues C38, C41, C56, and C59. The C4-type zinc-finger motif lies at 38 to 59 (CPGCKQAIYQKDLGQAKICPNC).

This sequence belongs to the AccD/PCCB family. Acetyl-CoA carboxylase is a heterohexamer composed of biotin carboxyl carrier protein (AccB), biotin carboxylase (AccC) and two subunits each of ACCase subunit alpha (AccA) and ACCase subunit beta (AccD). The cofactor is Zn(2+).

The protein localises to the cytoplasm. It carries out the reaction N(6)-carboxybiotinyl-L-lysyl-[protein] + acetyl-CoA = N(6)-biotinyl-L-lysyl-[protein] + malonyl-CoA. It functions in the pathway lipid metabolism; malonyl-CoA biosynthesis; malonyl-CoA from acetyl-CoA: step 1/1. In terms of biological role, component of the acetyl coenzyme A carboxylase (ACC) complex. Biotin carboxylase (BC) catalyzes the carboxylation of biotin on its carrier protein (BCCP) and then the CO(2) group is transferred by the transcarboxylase to acetyl-CoA to form malonyl-CoA. This Streptococcus thermophilus (strain ATCC BAA-491 / LMD-9) protein is Acetyl-coenzyme A carboxylase carboxyl transferase subunit beta.